Here is a 364-residue protein sequence, read N- to C-terminus: 3-isopropylmalate dehydrogenase (364 aa).

77-90 contributes to the NAD(+) binding site; it reads GPKWDNLPTDKRPE. Substrate is bound by residues arginine 97, arginine 107, arginine 135, and aspartate 224. Residues aspartate 224, aspartate 248, and aspartate 252 each contribute to the Mg(2+) site. 281–293 serves as a coordination point for NAD(+); the sequence is GSAPDIAGKGIAN.

It belongs to the isocitrate and isopropylmalate dehydrogenases family. LeuB type 1 subfamily. In terms of assembly, homodimer. Mg(2+) is required as a cofactor. Requires Mn(2+) as cofactor.

Its subcellular location is the cytoplasm. The catalysed reaction is (2R,3S)-3-isopropylmalate + NAD(+) = 4-methyl-2-oxopentanoate + CO2 + NADH. It functions in the pathway amino-acid biosynthesis; L-leucine biosynthesis; L-leucine from 3-methyl-2-oxobutanoate: step 3/4. Its function is as follows. Catalyzes the oxidation of 3-carboxy-2-hydroxy-4-methylpentanoate (3-isopropylmalate) to 3-carboxy-4-methyl-2-oxopentanoate. The product decarboxylates to 4-methyl-2 oxopentanoate. The sequence is that of 3-isopropylmalate dehydrogenase (leuB) from Aquifex aeolicus (strain VF5).